Reading from the N-terminus, the 122-residue chain is Small ribosomal subunit protein uS13 (122 aa).

The interval 95–122 (GLPVRGQRTHTNARTRKGPAKPIAGKKK) is disordered.

The protein belongs to the universal ribosomal protein uS13 family. As to quaternary structure, part of the 30S ribosomal subunit. Forms a loose heterodimer with protein S19. Forms two bridges to the 50S subunit in the 70S ribosome.

Located at the top of the head of the 30S subunit, it contacts several helices of the 16S rRNA. In the 70S ribosome it contacts the 23S rRNA (bridge B1a) and protein L5 of the 50S subunit (bridge B1b), connecting the 2 subunits; these bridges are implicated in subunit movement. Contacts the tRNAs in the A and P-sites. The polypeptide is Small ribosomal subunit protein uS13 (Caulobacter sp. (strain K31)).